The primary structure comprises 551 residues: Chaperonin GroEL (551 aa).

ATP-binding positions include 30 to 33 (TLGP), lysine 51, 87 to 91 (DGTTT), glycine 415, 479 to 481 (NAA), and aspartate 495. The interval 523 to 551 (DSPKEDKSSDMPSPSAGGMGGMGGMGGMM) is disordered. The segment covering 539–551 (GGMGGMGGMGGMM) has biased composition (gly residues).

The protein belongs to the chaperonin (HSP60) family. Forms a cylinder of 14 subunits composed of two heptameric rings stacked back-to-back. Interacts with the co-chaperonin GroES.

The protein resides in the cytoplasm. The catalysed reaction is ATP + H2O + a folded polypeptide = ADP + phosphate + an unfolded polypeptide.. Functionally, together with its co-chaperonin GroES, plays an essential role in assisting protein folding. The GroEL-GroES system forms a nano-cage that allows encapsulation of the non-native substrate proteins and provides a physical environment optimized to promote and accelerate protein folding. The sequence is that of Chaperonin GroEL from Buchnera aphidicola subsp. Chaetophorus leucomelas.